The primary structure comprises 452 residues: Keratin, type II cytoskeletal 80 (452 aa).

The interval 1 to 82 is head; the sequence is MAYRSCVVGF…DPAVQQQKNQ (82 aa). Ser45 is modified (phosphoserine). The tract at residues 82-118 is coil 1A; that stretch reads QEKEEMKALNDKFASLIGKVQALEQRNQLLETRWSFL. The region spanning 83–394 is the IF rod domain; sequence EKEEMKALND…KLMEGEESRM (312 aa). Residues 119 to 135 are linker 1; that stretch reads QGQGSATFDLSHHYETF. The interval 136 to 227 is coil 1B; sequence QGRLQEELRK…TVYEQELKDL (92 aa). A linker 12 region spans residues 228 to 251; the sequence is TAQVKDVSVTVGLDSRCHIDLSGI. The coil 2 stretch occupies residues 252–390; sequence VEEVKAQYDA…ATYHKLMEGE (139 aa). Residues 391 to 452 are tail; the sequence is ESRMDLPSAT…YLSQESEASE (62 aa). Residues 412 to 452 form a disordered region; sequence TASKSGLTKTSSRKKKNRRGPVIKITEMSEKYLSQESEASE. Residues 422–432 show a composition bias toward basic residues; sequence SSRKKKNRRGP. The segment covering 443-452 has biased composition (polar residues); sequence YLSQESEASE.

It belongs to the intermediate filament family. In terms of assembly, heterotetramer of two type I and two type II keratins.

This chain is Keratin, type II cytoskeletal 80 (Krt80), found in Mus musculus (Mouse).